The primary structure comprises 222 residues: TPR repeat-containing protein BH2049 (222 aa).

TPR repeat units follow at residues 34 to 67 (AEPL…NREH) and 169 to 202 (PVGL…KEDK).

The chain is TPR repeat-containing protein BH2049 from Halalkalibacterium halodurans (strain ATCC BAA-125 / DSM 18197 / FERM 7344 / JCM 9153 / C-125) (Bacillus halodurans).